We begin with the raw amino-acid sequence, 125 residues long: Large ribosomal subunit protein bL12 (125 aa).

This sequence belongs to the bacterial ribosomal protein bL12 family. In terms of assembly, homodimer. Part of the ribosomal stalk of the 50S ribosomal subunit. Forms a multimeric L10(L12)X complex, where L10 forms an elongated spine to which 2 to 4 L12 dimers bind in a sequential fashion. Binds GTP-bound translation factors.

In terms of biological role, forms part of the ribosomal stalk which helps the ribosome interact with GTP-bound translation factors. Is thus essential for accurate translation. The sequence is that of Large ribosomal subunit protein bL12 from Ruthia magnifica subsp. Calyptogena magnifica.